A 163-amino-acid chain; its full sequence is Probable chemoreceptor glutamine deamidase CheD (163 aa).

The protein belongs to the CheD family.

It catalyses the reaction L-glutaminyl-[protein] + H2O = L-glutamyl-[protein] + NH4(+). Probably deamidates glutamine residues to glutamate on methyl-accepting chemotaxis receptors (MCPs), playing an important role in chemotaxis. This is Probable chemoreceptor glutamine deamidase CheD from Borreliella afzelii (strain PKo) (Borrelia afzelii).